Reading from the N-terminus, the 424-residue chain is S-adenosylmethionine synthase (424 aa).

Residue H16 participates in ATP binding. D18 serves as a coordination point for Mg(2+). E44 is a K(+) binding site. L-methionine contacts are provided by E57 and Q100. Positions 100 to 110 (QSPDIAQGVNT) are flexible loop. Residues 175–177 (DGK), 251–252 (KF), D260, 266–267 (RK), A283, and K287 each bind ATP. L-methionine is bound at residue D260. K291 is an L-methionine binding site.

It belongs to the AdoMet synthase family. In terms of assembly, homotetramer; dimer of dimers. Requires Mg(2+) as cofactor. The cofactor is K(+).

Its subcellular location is the cytoplasm. The catalysed reaction is L-methionine + ATP + H2O = S-adenosyl-L-methionine + phosphate + diphosphate. It functions in the pathway amino-acid biosynthesis; S-adenosyl-L-methionine biosynthesis; S-adenosyl-L-methionine from L-methionine: step 1/1. Functionally, catalyzes the formation of S-adenosylmethionine (AdoMet) from methionine and ATP. The overall synthetic reaction is composed of two sequential steps, AdoMet formation and the subsequent tripolyphosphate hydrolysis which occurs prior to release of AdoMet from the enzyme. This chain is S-adenosylmethionine synthase, found in Nostoc punctiforme (strain ATCC 29133 / PCC 73102).